The following is a 256-amino-acid chain: Small ribosomal subunit protein eS1 (256 aa).

Residues 1-18 (MAVGKNKRLSKGKKGVKK) show a composition bias toward basic residues. Residues 1-21 (MAVGKNKRLSKGKKGVKKRTV) are disordered. The residue at position 2 (Ala-2) is an N-acetylalanine; partial.

This sequence belongs to the eukaryotic ribosomal protein eS1 family. As to quaternary structure, component of the small ribosomal subunit. Mature ribosomes consist of a small (40S) and a large (60S) subunit. The 40S subunit contains about 33 different proteins and 1 molecule of RNA (18S). The 60S subunit contains about 49 different proteins and 3 molecules of RNA (25S, 5.8S and 5S).

It localises to the cytoplasm. The polypeptide is Small ribosomal subunit protein eS1 (rps1) (Neosartorya fischeri (strain ATCC 1020 / DSM 3700 / CBS 544.65 / FGSC A1164 / JCM 1740 / NRRL 181 / WB 181) (Aspergillus fischerianus)).